Reading from the N-terminus, the 372-residue chain is Neuropeptide S receptor (372 aa).

Topologically, residues M1 to Q52 are extracellular. 2 N-linked (GlcNAc...) asparagine glycosylation sites follow: N4 and N13. Residues L53 to S73 traverse the membrane as a helical segment. Topologically, residues T74–R82 are cytoplasmic. A helical membrane pass occupies residues M83 to L103. Topologically, residues T104 to R122 are extracellular. C121 and C198 are oxidised to a cystine. The helical transmembrane segment at I123 to S143 threads the bilayer. Residues I144–K165 lie on the Cytoplasmic side of the membrane. Residues V166 to F186 traverse the membrane as a helical segment. The Extracellular portion of the chain corresponds to G187–T213. Residues I214–V234 traverse the membrane as a helical segment. Residues I235–Y276 lie on the Cytoplasmic side of the membrane. The chain crosses the membrane as a helical span at residues S277–L297. Over D298–S313 the chain is Extracellular. The helical transmembrane segment at V314–F334 threads the bilayer. The Cytoplasmic portion of the chain corresponds to S335–I372.

This sequence belongs to the G-protein coupled receptor 1 family. Vasopressin/oxytocin receptor subfamily.

It localises to the cell membrane. G-protein coupled receptor for neuropeptide S (NPS). Promotes mobilization of intracellular Ca(2+) stores. Inhibits cell growth in response to NPS binding. Involved in pathogenesis of asthma and other IgE-mediated diseases. This Rattus norvegicus (Rat) protein is Neuropeptide S receptor (Npsr1).